The chain runs to 401 residues: MRTLAIFFIGAAVAAHVSPSHLRPRDPKPKGPVDPGISPYCTYYDEAYDKSYTCDDLLSAWVISKQDFESWNPAVGSDCKLVLGHSYCVEVNHGNPLSTTTTTTTSTTTKTTTKTTTTTTAAPKPTSSAPSGPSPTQDGLVHDCKAYYFVKAGDTCDKISQMYGTFSTAQFIEWNPAVGSSCTGLWAGYYYCVGVPGTPTSRTSTAGPTSTKPANGVTTPQPTQPNMVQDCDQFVYVQPGDQCGTVASRAGVSLSDFLQWNPSTGKDCSGLWANAYACVGVIPAIALSARYHADCTGATHSTEHFNPGTGHCVNTACQVASLDIAAKGTCPDGNVRISYWEQPDCTGSWFGYGYASRGQCRTLWSEGWKFKSLYITCASKESDCVSQNSCTISPIPNNNVC.

The signal sequence occupies residues 1 to 19; that stretch reads MRTLAIFFIGAAVAAHVSP. The LysM 1 domain maps to 42 to 89; the sequence is TYYDEAYDKSYTCDDLLSAWVISKQDFESWNPAVGSDCKLVLGHSYCV. Low complexity predominate over residues 98–136; sequence STTTTTTTSTTTKTTTKTTTTTTAAPKPTSSAPSGPSPT. The segment at 98-137 is disordered; it reads STTTTTTTSTTTKTTTKTTTTTTAAPKPTSSAPSGPSPTQ. The region spanning 146–193 is the LysM 2 domain; that stretch reads AYYFVKAGDTCDKISQMYGTFSTAQFIEWNPAVGSSCTGLWAGYYYCV. Residues 201–223 are disordered; that stretch reads SRTSTAGPTSTKPANGVTTPQPT. Residues 233 to 279 form the LysM 3 domain; sequence QFVYVQPGDQCGTVASRAGVSLSDFLQWNPSTGKDCSGLWANAYACV.

The protein belongs to the secreted LysM effector family.

In terms of biological role, might have a role in sequestration of chitin oligosaccharides (breakdown products of fungal cell walls that are released during invasion and act as triggers of host immunity) to dampen host defense. This Beauveria bassiana (strain ARSEF 2860) (White muscardine disease fungus) protein is Secreted LysM effector Blys8.